A 617-amino-acid polypeptide reads, in one-letter code: Electron transfer flavoprotein-ubiquinone oxidoreductase, mitochondrial (617 aa).

Residues 1 to 33 constitute a mitochondrion transit peptide; sequence MLVPLAKLSCLAYQCFHALKIKKNYLPLCATRW. 71 to 85 serves as a coordination point for FAD; sequence VVIVGAGPAGLSAAV. An N6-acetyllysine modification is found at K96. The stretch at 109-130 is an intramembrane region; it reads IGAHTLSGACLDPGAFKELFPD. An N6-acetyllysine mark is found at K132 and K223. 2 residues coordinate a ubiquinone: G305 and G306. Residue K357 is modified to N6-acetyllysine. The stretch at 428 to 447 is an intramembrane region; that stretch reads IGLHVTEYEDNLKNSWVWKE. The residue at position 551 (S551) is a Phosphoserine. C561, C586, C589, and C592 together coordinate [4Fe-4S] cluster. The region spanning 577–606 is the 4Fe-4S ferredoxin-type domain; it reads FRLQINAQNCVHCKTCDIKDPSQNINWVVP.

This sequence belongs to the ETF-QO/FixC family. Monomer. Requires [4Fe-4S] cluster as cofactor. FAD is required as a cofactor.

It localises to the mitochondrion inner membrane. The enzyme catalyses a ubiquinone + reduced [electron-transfer flavoprotein] = a ubiquinol + oxidized [electron-transfer flavoprotein] + H(+). Accepts electrons from ETF and reduces ubiquinone. The sequence is that of Electron transfer flavoprotein-ubiquinone oxidoreductase, mitochondrial from Homo sapiens (Human).